Consider the following 147-residue polypeptide: 3-dehydroquinate dehydratase (147 aa).

The active-site Proton acceptor is tyrosine 24. Residues asparagine 75, histidine 81, and aspartate 88 each coordinate substrate. The Proton donor role is filled by histidine 101. Substrate contacts are provided by residues 102–103 (IS) and arginine 112.

Belongs to the type-II 3-dehydroquinase family. Homododecamer.

It carries out the reaction 3-dehydroquinate = 3-dehydroshikimate + H2O. The protein operates within metabolic intermediate biosynthesis; chorismate biosynthesis; chorismate from D-erythrose 4-phosphate and phosphoenolpyruvate: step 3/7. Its function is as follows. Catalyzes a trans-dehydration via an enolate intermediate. The sequence is that of 3-dehydroquinate dehydratase from Cereibacter sphaeroides (strain KD131 / KCTC 12085) (Rhodobacter sphaeroides).